We begin with the raw amino-acid sequence, 582 residues long: 5-aminolevulinate synthase, erythroid-specific, mitochondrial (582 aa).

Residues 1-44 (MLLQRCPVLIRSPTAILGKMIKTHQFLIGIGRCPILATQGTTCS) constitute a mitochondrion transit peptide. Position 158 (arginine 158) interacts with succinyl-CoA. 2 residues coordinate pyridoxal 5'-phosphate: cysteine 253 and phenylalanine 254. Succinyl-CoA is bound by residues serine 275 and lysine 294. Pyridoxal 5'-phosphate-binding residues include serine 327, histidine 355, and threonine 383. The active site involves lysine 386. Lysine 386 carries the post-translational modification N6-(pyridoxal phosphate)lysine. The pyridoxal 5'-phosphate site is built by threonine 415 and threonine 416. Threonine 503 provides a ligand contact to succinyl-CoA.

It belongs to the class-II pyridoxal-phosphate-dependent aminotransferase family. Homodimer. The cofactor is pyridoxal 5'-phosphate.

It localises to the mitochondrion inner membrane. The enzyme catalyses succinyl-CoA + glycine + H(+) = 5-aminolevulinate + CO2 + CoA. It participates in porphyrin-containing compound metabolism; protoporphyrin-IX biosynthesis; 5-aminolevulinate from glycine: step 1/1. Catalyzes the pyridoxal 5'-phosphate (PLP)-dependent condensation of succinyl-CoA and glycine to form aminolevulinic acid (ALA), with CoA and CO2 as by-products. Contributes significantly to heme formation during erythropoiesis. The protein is 5-aminolevulinate synthase, erythroid-specific, mitochondrial (ALAS2) of Delphinapterus leucas (Beluga whale).